Here is a 473-residue protein sequence, read N- to C-terminus: Ribulose bisphosphate carboxylase large chain (473 aa).

A propeptide spanning residues Met-1–Ser-2 is cleaved from the precursor. Residue Pro-3 is modified to N-acetylproline. N6,N6,N6-trimethyllysine is present on Lys-14. Substrate-binding residues include Asn-123 and Thr-173. The active-site Proton acceptor is the Lys-175. Lys-177 is a binding site for substrate. 3 residues coordinate Mg(2+): Lys-201, Asp-203, and Glu-204. Lys-201 carries the N6-carboxylysine modification. His-294 functions as the Proton acceptor in the catalytic mechanism. Residues Arg-295, His-327, and Ser-379 each coordinate substrate.

Belongs to the RuBisCO large chain family. Type I subfamily. Heterohexadecamer of 8 large chains and 8 small chains; disulfide-linked. The disulfide link is formed within the large subunit homodimers. The cofactor is Mg(2+). The disulfide bond which can form in the large chain dimeric partners within the hexadecamer appears to be associated with oxidative stress and protein turnover.

It localises to the plastid. The protein resides in the chloroplast. The enzyme catalyses 2 (2R)-3-phosphoglycerate + 2 H(+) = D-ribulose 1,5-bisphosphate + CO2 + H2O. It carries out the reaction D-ribulose 1,5-bisphosphate + O2 = 2-phosphoglycolate + (2R)-3-phosphoglycerate + 2 H(+). RuBisCO catalyzes two reactions: the carboxylation of D-ribulose 1,5-bisphosphate, the primary event in carbon dioxide fixation, as well as the oxidative fragmentation of the pentose substrate in the photorespiration process. Both reactions occur simultaneously and in competition at the same active site. This is Ribulose bisphosphate carboxylase large chain from Sesbania sesban (Egyptian riverhemp).